A 101-amino-acid polypeptide reads, in one-letter code: Integration host factor subunit alpha (101 aa).

This sequence belongs to the bacterial histone-like protein family. In terms of assembly, heterodimer of an alpha and a beta chain.

Its function is as follows. This protein is one of the two subunits of integration host factor, a specific DNA-binding protein that functions in genetic recombination as well as in transcriptional and translational control. The sequence is that of Integration host factor subunit alpha from Alkalilimnicola ehrlichii (strain ATCC BAA-1101 / DSM 17681 / MLHE-1).